Here is an 885-residue protein sequence, read N- to C-terminus: Chromatin assembly factor 1 subunit A-B (885 aa).

4 disordered regions span residues 1 to 24 (MPGK…KMVQ), 115 to 157 (EDSN…NEEC), 176 to 361 (LDKP…EEEK), and 536 to 605 (VDSD…QKLK). The segment covering 12–21 (KSSTKSNTKK) has biased composition (low complexity). 3 stretches are compositionally biased toward polar residues: residues 116–128 (DSNI…SPLN), 134–157 (QLAN…NEEC), and 182–193 (SAASCTSVSNFS). Low complexity-rich tracts occupy residues 211–227 (VSVS…SPDV) and 237–254 (SSPS…SNKT). A coiled-coil region spans residues 251–376 (SNKTSAEKKK…KAEITRFLQK (126 aa)). Over residues 255-361 (SAEKKKTKDK…EEKRLKEEEK (107 aa)) the composition is skewed to basic and acidic residues. Acidic residues-rich tracts occupy residues 536–548 (VDSD…EEPG) and 557–573 (ENED…DDDG). Residues 629 to 665 (CVWCDSKASEIRLLQKFSACILESPAVEEELTQDISS) are necessary for homodimerization, competence for chromatin assembly.

It belongs to the CHAF1A family. As to quaternary structure, homodimer.

The protein localises to the nucleus. Functionally, involved in chromatin assembly in DNA replication and DNA repair. This chain is Chromatin assembly factor 1 subunit A-B (chaf1a-b), found in Xenopus laevis (African clawed frog).